Reading from the N-terminus, the 126-residue chain is Large ribosomal subunit protein bL12 (126 aa).

It belongs to the bacterial ribosomal protein bL12 family. Homodimer. Part of the ribosomal stalk of the 50S ribosomal subunit. Forms a multimeric L10(L12)X complex, where L10 forms an elongated spine to which 2 to 4 L12 dimers bind in a sequential fashion. Binds GTP-bound translation factors.

In terms of biological role, forms part of the ribosomal stalk which helps the ribosome interact with GTP-bound translation factors. Is thus essential for accurate translation. This Francisella tularensis subsp. mediasiatica (strain FSC147) protein is Large ribosomal subunit protein bL12.